Consider the following 314-residue polypeptide: Methionyl-tRNA formyltransferase (314 aa).

110 to 113 serves as a coordination point for (6S)-5,6,7,8-tetrahydrofolate; the sequence is SLLP.

Belongs to the Fmt family.

The catalysed reaction is L-methionyl-tRNA(fMet) + (6R)-10-formyltetrahydrofolate = N-formyl-L-methionyl-tRNA(fMet) + (6S)-5,6,7,8-tetrahydrofolate + H(+). Attaches a formyl group to the free amino group of methionyl-tRNA(fMet). The formyl group appears to play a dual role in the initiator identity of N-formylmethionyl-tRNA by promoting its recognition by IF2 and preventing the misappropriation of this tRNA by the elongation apparatus. This is Methionyl-tRNA formyltransferase from Dichelobacter nodosus (strain VCS1703A).